A 442-amino-acid polypeptide reads, in one-letter code: Putative mannan endo-1,6-alpha-mannosidase C1198.07c (442 aa).

Positions 1 to 19 (MRYLSFFFEFFFLFSFAFA) are cleaved as a signal peptide. At 20 to 421 (FDFDVTSDDS…TPATKSDKGW (402 aa)) the chain is on the lumenal side. Residues Asn-75, Asn-124, Asn-193, Asn-229, Asn-254, Asn-257, and Asn-356 are each glycosylated (N-linked (GlcNAc...) asparagine). Residues 422–442 (AGFLTFAFSFVFLLFSIWLYF) traverse the membrane as a helical segment.

Belongs to the glycosyl hydrolase 76 family.

Its subcellular location is the endoplasmic reticulum membrane. The enzyme catalyses Random hydrolysis of (1-&gt;6)-alpha-D-mannosidic linkages in unbranched (1-&gt;6)-mannans.. The protein is Putative mannan endo-1,6-alpha-mannosidase C1198.07c of Schizosaccharomyces pombe (strain 972 / ATCC 24843) (Fission yeast).